The primary structure comprises 782 residues: uncharacterized protein (782 aa).

Disordered stretches follow at residues 1-25 (MFSPSKFRKQVNESESVSNCESTTS) and 175-195 (RPRTSPYKRAGDASMSREDLR). Residues 13–25 (ESESVSNCESTTS) show a composition bias toward low complexity. Basic and acidic residues predominate over residues 183–195 (RAGDASMSREDLR). Coiled coils occupy residues 223–331 (RENR…STLN), 348–398 (LSQF…VSTL), 428–601 (NRIN…QLLN), and 699–743 (TIET…IIAK). Residues 748 to 782 (NIPKTEKSSPMKKVPPIENFRAKSQTSITGLSPVL) form a disordered region. The span at 769-782 (AKSQTSITGLSPVL) shows a compositional bias: polar residues.

This is an uncharacterized protein from Caenorhabditis elegans.